A 217-amino-acid polypeptide reads, in one-letter code: Ribosomal RNA small subunit methyltransferase G (217 aa).

Residues Gly-76, Phe-81, 128-129 (LE), and Arg-142 contribute to the S-adenosyl-L-methionine site.

It belongs to the methyltransferase superfamily. RNA methyltransferase RsmG family.

It is found in the cytoplasm. The enzyme catalyses guanosine(527) in 16S rRNA + S-adenosyl-L-methionine = N(7)-methylguanosine(527) in 16S rRNA + S-adenosyl-L-homocysteine. In terms of biological role, specifically methylates the N7 position of guanine in position 527 of 16S rRNA. This is Ribosomal RNA small subunit methyltransferase G from Rhizorhabdus wittichii (strain DSM 6014 / CCUG 31198 / JCM 15750 / NBRC 105917 / EY 4224 / RW1) (Sphingomonas wittichii).